A 1417-amino-acid polypeptide reads, in one-letter code: DNA-directed RNA polymerase subunit beta' (1417 aa).

Residues C68, C70, C83, and C86 each coordinate Zn(2+). 3 residues coordinate Mg(2+): D458, D460, and D462. Residues C811, C884, C891, and C894 each coordinate Zn(2+).

It belongs to the RNA polymerase beta' chain family. The RNAP catalytic core consists of 2 alpha, 1 beta, 1 beta' and 1 omega subunit. When a sigma factor is associated with the core the holoenzyme is formed, which can initiate transcription. The cofactor is Mg(2+). Zn(2+) is required as a cofactor.

It catalyses the reaction RNA(n) + a ribonucleoside 5'-triphosphate = RNA(n+1) + diphosphate. DNA-dependent RNA polymerase catalyzes the transcription of DNA into RNA using the four ribonucleoside triphosphates as substrates. This Francisella tularensis subsp. tularensis (strain FSC 198) protein is DNA-directed RNA polymerase subunit beta'.